The following is a 395-amino-acid chain: MKHLSLLALAAVAPTTALAGVIDHQQVTFEKPPTHNQIEKFLIQLGPGESRWVTEEEKWALKLVGFYVLEGMNFFDITAESDQGFSVKSFEQTKVTYPSEIKYQKELAPLSKDLSKGNMRENLVKFTSFHTRYYKSETGVQSATWLLERVQQAIDDSGASKHGVKVEKFNHPWGQFSIIATIPGRSNKTVVVGAHQDSINLFLPSILAAPGADDDGSGTVTILEAFRVLLQSDAIREGKAANTVEFHWYSAEEAGLLGSQAIFSEYSKTGRDVKAMLQQDMTGYVEGTLRAGEVESVGVITDFVDPGLTEFIKLVIKGYCDIPFVLTKCGYACSDHASASRYGYPSAFVIESEFKRSNQKIHTTSDTIELLSFDHMLQHAKMTLGLAYELAFAEL.

The first 19 residues, 1-19 (MKHLSLLALAAVAPTTALA), serve as a signal peptide directing secretion. Positions 20–95 (GVIDHQQVTF…SVKSFEQTKV (76 aa)) are excised as a propeptide. N187 carries N-linked (GlcNAc...) asparagine glycosylation. H195, D214, E253, and D280 together coordinate Zn(2+). C329 and C333 are disulfide-bonded. H362 is a binding site for Zn(2+).

It belongs to the peptidase M28 family. M28E subfamily. In terms of assembly, monomer. The cofactor is Zn(2+).

It is found in the secreted. Extracellular aminopeptidase that allows assimilation of proteinaceous substrates. The polypeptide is Leucine aminopeptidase 1 (LAP1) (Uncinocarpus reesii (strain UAMH 1704)).